The chain runs to 217 residues: Cytidylate kinase (217 aa).

Position 11–19 (11–19 (GPAGAGKST)) interacts with ATP.

This sequence belongs to the cytidylate kinase family. Type 1 subfamily.

Its subcellular location is the cytoplasm. The catalysed reaction is CMP + ATP = CDP + ADP. The enzyme catalyses dCMP + ATP = dCDP + ADP. This chain is Cytidylate kinase, found in Clostridium perfringens (strain SM101 / Type A).